A 140-amino-acid polypeptide reads, in one-letter code: Large ribosomal subunit protein bL17 (140 aa).

This sequence belongs to the bacterial ribosomal protein bL17 family. As to quaternary structure, part of the 50S ribosomal subunit. Contacts protein L32.

The protein is Large ribosomal subunit protein bL17 of Rhizobium rhizogenes (strain K84 / ATCC BAA-868) (Agrobacterium radiobacter).